A 78-amino-acid chain; its full sequence is Small integral membrane protein 1 (78 aa).

N-acetylmethionine is present on Met1. Residues 1–22 (MQSQESGVHYSRWDSSSRDEVS) are disordered. The Cytoplasmic segment spans residues 1–48 (MQSQESGVHYSRWDSSSRDEVSMTAMSSSEEASCYRRISQKLCSGKLG). Residues Ser6, Ser17, Ser22, and Ser27 each carry the phosphoserine modification. Basic and acidic residues predominate over residues 11–21 (SRWDSSSRDEV). The helical; Signal-anchor for type II membrane protein transmembrane segment at 49 to 69 (IAMKVLGGVALFWIIFILGYI) threads the bilayer. The Extracellular segment spans residues 70-78 (TGYYVHKCK).

It belongs to the SMIM1 family. In terms of assembly, homooligomer; disulfide-linked.

The protein resides in the cell membrane. In terms of biological role, regulator of red blood cell formation. In Mus musculus (Mouse), this protein is Small integral membrane protein 1.